Consider the following 273-residue polypeptide: Gamma-glutamyl cyclotransferase aclK (273 aa).

This sequence belongs to the class-I pyridoxal-phosphate-dependent aminotransferase family.

It catalyses the reaction an alpha-(gamma-L-glutamyl)-L-amino acid = 5-oxo-L-proline + an L-alpha-amino acid. It participates in mycotoxin biosynthesis. Gamma-glutamyl cyclotransferase; part of the gene cluster that mediates the biosynthesis of aspirochlorine (or antibiotic A30641), an unusual halogenated spiro compound with distinctive antifungal properties due to selective inhibition of protein biosynthesis, and which is also active against bacteria, viruses, and murine tumor cells. The non-ribosomal peptide synthetase (NRPS) aclP is responsible the formation of the diketopiperazine (DKP) core from the condensation of 2 phenylalanine residues. One Phe residue is tailored into chlorotyrosine by hydroxylation and chlorination, whereas the second Phe undergoes an unprecedented C-C bond cleavage to be converted into glycine. After formation of the DKP, sulfur is incorporated into the DKP by conjugation with glutathione by aclG, followed by its stepwise degradation to the thiol by aclI, aclJ and aclK, and the dithiol oxidation by aclT. In addition, oxygenases (aclB, aclC, aclL and aclO) and O-methyltransferases (aclM and aclU) act as tailoring enzymes to produce the intermediate dechloroaspirochlorine. Ultimately, chlorination of dechloroaspirochlorine by the halogenase aclH is the last step in the aspirochlorine pathway. This chain is Gamma-glutamyl cyclotransferase aclK, found in Aspergillus oryzae (strain ATCC 42149 / RIB 40) (Yellow koji mold).